A 1220-amino-acid chain; its full sequence is MNHIYKLKSYGIGTDRRFYGVANKTLETPDFLDPVRESFDWFLHVGIPEAFDRIFPIVSANGKLEISFRRGSLRVEKPENEYLAIREAKIKGKTYSARVYVTLVKVHSEDGEMEEQEILLAEFPFMTQGGTFIINGFEKVVVSQLIRSPGVCFRENVRNQQADDLFNKVEIIPQLGSWMEIFHKVTGNQVDTVKFRIDKHKNIPLLSFLRAIGFTNETVRKYFGNSPELLESIRRHKLESLEENLELIYRIVRKDDRITEEGLKNLIPSIIFNERRYNLASTGRFMLNAKLNLVERISQTYLAEDLVSKKNKILFKKGTYITRQLALEIQEKFNNEEIPLSEIEGVDSTIYARQLEITRNENLWKRFYVAIVKVWPNKKSMLQESEPVNVIATDPNLNEKTLVLSDIIAIVSYYFNLLSNLGKSDDPDSLVNKRIVSVGELLQNQFLIALTKIEKNSKEKISTKSDLSQLTVKSIINNKPIYNQFKNFFNSSKLSQFMDQINPLGEMASKRKVTSLGPGGLNRDTAQFEVRDVHTTHYGRICPVETPEGQNIGLILNFSVFSRINQYGFIITPYYQVKNRIVDYSKVHWLAASEEFDKSFAQSGVEIDQNNRIIPDKLTVRKNQTYLVLDAEQVNYIDVSSMQMTSISASAIPFLENNDANRALMGSNMQRQAVPLIKSEAPLVATGIEEAVARFSATNLRASISGKVTYVDAKKIIIDDGEKPEIHYLRYFEKSNQETLILQKPTVKVGDKVKKGQLICDGPSTDNGELALGKNVLVAFSTWYGYNYEDAIIISEKLVKDDVFTSIHIQEQTIKFRSTKAGNDILTAEIPNASAKSRLHLDANGIVIVGSEVDTGDILVGRTSPKGEDNPTAEEKLMAAIWGKKALAQKDTSLRVKNGEGGTVIDVQILSRDQGDNLEEGVGMLIKILIAQKRKIKVGDKMAGRHGNKGVVSVILPVEDMPFLEDGTPVDIVLNPQGVPSRMNIGQVLELHLGMVAKKLKTKFVTPVFDGIKIETIKKLFDEANIPESGKFKLFDGISGQPFENPVSVGYMYMLKLLHMVDDKMHARSIGPYSLTTQQPLGGKSQNGGQRFGEMETWALESFGATSVLSELLTYKSDNIQGRNLLYNNIISGGKIPSPGTPESFNVLAYELRGLLIKLEVHKNDQENQEVEEIKDPLELPEIPSNFIDEYNQDGRIELNKLEEFADFDEENIDFDKLTR.

Belongs to the RNA polymerase beta chain family. In terms of assembly, the RNAP catalytic core consists of 2 alpha, 1 beta, 1 beta' and 1 omega subunit. When a sigma factor is associated with the core the holoenzyme is formed, which can initiate transcription.

It catalyses the reaction RNA(n) + a ribonucleoside 5'-triphosphate = RNA(n+1) + diphosphate. Functionally, DNA-dependent RNA polymerase catalyzes the transcription of DNA into RNA using the four ribonucleoside triphosphates as substrates. The protein is DNA-directed RNA polymerase subunit beta of Mesomycoplasma hyopneumoniae (strain J / ATCC 25934 / NCTC 10110) (Mycoplasma hyopneumoniae).